Here is a 181-residue protein sequence, read N- to C-terminus: Adenine phosphoribosyltransferase (181 aa).

This sequence belongs to the purine/pyrimidine phosphoribosyltransferase family. Homodimer.

Its subcellular location is the cytoplasm. The catalysed reaction is AMP + diphosphate = 5-phospho-alpha-D-ribose 1-diphosphate + adenine. It participates in purine metabolism; AMP biosynthesis via salvage pathway; AMP from adenine: step 1/1. Its function is as follows. Catalyzes a salvage reaction resulting in the formation of AMP, that is energically less costly than de novo synthesis. The chain is Adenine phosphoribosyltransferase from Shewanella loihica (strain ATCC BAA-1088 / PV-4).